A 772-amino-acid chain; its full sequence is Delta-like protein A (772 aa).

A signal peptide spans 1 to 20; the sequence is MGRHLLLLLFSILYMLLCQA. The Extracellular segment spans residues 21-536; it reads SSSGVFELKL…SQIASDVPWT (516 aa). Residues 179 to 223 enclose the DSL domain; that stretch reads FVCDEHYYGEGCSVFCRPRDDAFGHFTCGERGEIICDAGWKGQYC. Disulfide bonds link cysteine 181/cysteine 190, cysteine 194/cysteine 206, cysteine 214/cysteine 223, cysteine 228/cysteine 239, cysteine 232/cysteine 245, cysteine 259/cysteine 270, cysteine 265/cysteine 276, cysteine 278/cysteine 287, cysteine 294/cysteine 306, cysteine 300/cysteine 316, cysteine 318/cysteine 327, cysteine 334/cysteine 345, cysteine 339/cysteine 354, cysteine 356/cysteine 365, cysteine 372/cysteine 383, cysteine 377/cysteine 393, cysteine 395/cysteine 404, cysteine 411/cysteine 422, cysteine 416/cysteine 431, cysteine 433/cysteine 442, cysteine 449/cysteine 460, cysteine 454/cysteine 469, cysteine 471/cysteine 480, cysteine 487/cysteine 498, cysteine 492/cysteine 507, and cysteine 509/cysteine 518. EGF-like domains are found at residues 225-257, 257-288, and 290-328; these read EPICLPGCDEEHGFCEKPGECKCRVGFKGRYCD, DECIRYPGCLHGTCQQPWQCNCQEGWGGLFCN, and DLNYCTHHKPCLNGATCSNTGQGSYTCSCRPGFSGASCE. The EGF-like 4; calcium-binding domain maps to 330-366; it reads EVNECTGNPCRNGGSCTDMENTYSCTCPPGFYGKNCE. EGF-like domains lie at 368-405, 407-443, 445-481, and 483-519; these read SAMTCADGPCFNGGRCADNPDGGYFCQCPTGYAGFNCE, KIDHCSSSPCSNGARCVDLVNSYLCQCPDGFTGMNCD, AGDECSMYPCQNGGTCQEGASGYMCTCPPGYTGRNCS, and PVSRCQHNPCHNGATCHERNNRYVCACVSGYGGRNCQ. A glycan (N-linked (GlcNAc...) asparagine) is linked at asparagine 479. Residues 537-557 traverse the membrane as a helical segment; it reads AVGSGVLLVLLLVVACAVVVV. Topologically, residues 558–772 are cytoplasmic; it reads CVRSKVQQRR…KDECVIATEV (215 aa). The disordered stretch occupies residues 688 to 722; sequence EEKRRKRLKSDASEKSKYSESRYSESKYSESKYSE. The segment covering 696–722 has biased composition (basic and acidic residues); that stretch reads KSDASEKSKYSESRYSESKYSESKYSE.

In terms of assembly, interacts with mib. Post-translationally, ubiquitinated by mib, leading to its endocytosis and subsequent degradation. Ubiquitinated by the ECS(ASB11) complex, leading to its degradation by the proteasome. In terms of tissue distribution, expressed in nervous system. In the developing nervous system, it is expressed in overlapping regions with deltaB (dlb) and deltaD (dld); in the neural plate, dla is expressed in patches of contiguous cells with dld, while dlb is confined to scattered cells within those patches that will differentiate as neurons. In 24 hours embryos, expressed in the hindbrain in stripes adjacent to rhombomere boundaries, but not in the actual boundary cells. During gastrulation and tail formation, expressed in embryonic midline cells. Expressed in hair cells of inner ear.

The protein resides in the membrane. Acts as a ligand for Notch receptors and is involved in primary neurogenesis. Can activate Notch receptors, thereby playing a key role in lateral inhibition, a process that prevents the immediate neighbors of each nascent neural cell from simultaneously embarking on neural differentiation. Required for boundary formation during segmentation of the hindbrain. Required for midline cell fate specification prior to germ layer formation; regulates specification of floorplate, notochord and hypochord. In inner ear, it prevents adjacent cells from adopting the same cell fate. Plays a role in angiogenesis. This Danio rerio (Zebrafish) protein is Delta-like protein A (dla).